Reading from the N-terminus, the 443-residue chain is Tubulin beta chain (443 aa).

Positions 11, 69, 138, 142, 143, 144, 204, and 226 each coordinate GTP. A Mg(2+)-binding site is contributed by Glu-69.

The protein belongs to the tubulin family. In terms of assembly, dimer of alpha and beta chains. A typical microtubule is a hollow water-filled tube with an outer diameter of 25 nm and an inner diameter of 15 nM. Alpha-beta heterodimers associate head-to-tail to form protofilaments running lengthwise along the microtubule wall with the beta-tubulin subunit facing the microtubule plus end conferring a structural polarity. Microtubules usually have 13 protofilaments but different protofilament numbers can be found in some organisms and specialized cells. The cofactor is Mg(2+).

The protein resides in the cytoplasm. Its subcellular location is the cytoskeleton. Its function is as follows. Tubulin is the major constituent of microtubules, a cylinder consisting of laterally associated linear protofilaments composed of alpha- and beta-tubulin heterodimers. Microtubules grow by the addition of GTP-tubulin dimers to the microtubule end, where a stabilizing cap forms. Below the cap, tubulin dimers are in GDP-bound state, owing to GTPase activity of alpha-tubulin. The protein is Tubulin beta chain of Thalassiosira weissflogii (Marine diatom).